Reading from the N-terminus, the 267-residue chain is Protein isy-1 (267 aa).

The stretch at 175–204 forms a coiled coil; the sequence is LEKLIEEKNIERINKEFAEKQAQKQQTASD. Residues 195–221 are disordered; it reads QAQKQQTASDAAPENIYKVEEDDDDDL.

Belongs to the ISY1 family. As to expression, ubiquitously expressed.

The protein resides in the nucleus. Functionally, regulates the processing of the mir-60 microRNA (miRNA), which in turn negatively regulates the expression of the transcription factor zip-10. Does not affect the splicing of zip-10. The sequence is that of Protein isy-1 from Caenorhabditis elegans.